The primary structure comprises 425 residues: Cyanogenic beta-glucosidase (425 aa).

Residues 1-11 (LLSITTTHIHA) form the signal peptide. A beta-D-glucoside contacts are provided by residues Gln44, His148, and 193–194 (NE). Glu194 (proton donor) is an active-site residue. Cys213 and Cys221 form a disulfide bridge. N-linked (GlcNAc...) asparagine glycosylation is present at Asn220. The a beta-D-glucoside site is built by Tyr337 and Glu408. The active-site Nucleophile is the Glu408. Residue Asn412 is glycosylated (N-linked (GlcNAc...) asparagine).

It belongs to the glycosyl hydrolase 1 family. Homodimer. In terms of tissue distribution, leaves.

The catalysed reaction is Hydrolysis of terminal, non-reducing beta-D-glucosyl residues with release of beta-D-glucose.. In terms of biological role, hydrolyzes cyanoglucosides, contributing to the release of hydrocyanic acid, which functions as a defense mechanism against small predators, when the leaf tissue is damaged. The chain is Cyanogenic beta-glucosidase (LI) from Trifolium repens (Creeping white clover).